The sequence spans 295 residues: Putative xyloglucan endotransglucosylase/hydrolase protein 1 (295 aa).

The first 24 residues, 1-24 (MNKMEYLSIFGFVSVLYLIIRVDA), serve as a signal peptide directing secretion. The region spanning 27–225 (YEVNGIDQSK…WSLAPFKANF (199 aa)) is the GH16 domain. The active-site Nucleophile is the Glu113. The active-site Proton donor is Glu117. Xyloglucan contacts are provided by residues Glu117, 129 to 131 (QTN), and 139 to 141 (NRE). Asn180 carries N-linked (GlcNAc...) asparagine glycosylation. Xyloglucan contacts are provided by residues 204 to 205 (NW) and Gly209. N-linked (GlcNAc...) asparagine glycosylation is found at Asn215 and Asn229. 2 cysteine pairs are disulfide-bonded: Cys233–Cys242 and Cys278–Cys291. Arg283 contributes to the xyloglucan binding site.

The protein belongs to the glycosyl hydrolase 16 family. XTH group 1 subfamily. In terms of processing, contains at least one intrachain disulfide bond essential for its enzymatic activity.

The protein localises to the secreted. It is found in the cell wall. It localises to the extracellular space. The protein resides in the apoplast. It carries out the reaction breaks a beta-(1-&gt;4) bond in the backbone of a xyloglucan and transfers the xyloglucanyl segment on to O-4 of the non-reducing terminal glucose residue of an acceptor, which can be a xyloglucan or an oligosaccharide of xyloglucan.. In terms of biological role, may catalyze xyloglucan endohydrolysis (XEH) and/or endotransglycosylation (XET). Cleaves and religates xyloglucan polymers, an essential constituent of the primary cell wall, and thereby participates in cell wall construction of growing tissues. This Arabidopsis thaliana (Mouse-ear cress) protein is Putative xyloglucan endotransglucosylase/hydrolase protein 1 (XTH1).